Consider the following 249-residue polypeptide: MEAAADRPAETRSRVEKDSRRAKKDSPAKTQSPAQDTSIMLRSNADTGKVLALPEHKKKRKGYLPAESVKILRDWMYKHRFRAYPSEAEKRMLSKKTNLSLSQISNWFINARRRILPDMLQRRGNDPTVGHKTGKDAHATHLQSTDASVPAKSGPRGSDNVQSLPLRSSPKGQMSGEKIPEPGSAPSQKLTMIAQPKKKVKVSNITSSSSPEPVSTEEYADFSSFQLLVDAAVQRAAELELEKNQESNP.

The span at 1–27 (MEAAADRPAETRSRVEKDSRRAKKDSP) shows a compositional bias: basic and acidic residues. Disordered regions lie at residues 1 to 60 (MEAA…KKKR) and 121 to 215 (QRRG…EPVS). Residues 28–46 (AKTQSPAQDTSIMLRSNAD) are compositionally biased toward polar residues. Residues 55–118 (EHKKKRKGYL…INARRRILPD (64 aa)) constitute a DNA-binding region (homeobox; TALE-type). Over residues 159 to 172 (DNVQSLPLRSSPKG) the composition is skewed to polar residues. The span at 202-215 (VSNITSSSSPEPVS) shows a compositional bias: low complexity.

It belongs to the TALE/TGIF homeobox family.

It is found in the nucleus. In terms of biological role, may have a transcription role in testis. This is Homeobox protein TGIF2LX (TGIF2LX) from Miopithecus talapoin (Angolan talapoin).